A 306-amino-acid chain; its full sequence is Ribonuclease Z (306 aa).

Zn(2+) contacts are provided by H63, H65, D67, H68, H140, D211, and H269. Catalysis depends on D67, which acts as the Proton acceptor.

Belongs to the RNase Z family. As to quaternary structure, homodimer. It depends on Zn(2+) as a cofactor.

The enzyme catalyses Endonucleolytic cleavage of RNA, removing extra 3' nucleotides from tRNA precursor, generating 3' termini of tRNAs. A 3'-hydroxy group is left at the tRNA terminus and a 5'-phosphoryl group is left at the trailer molecule.. Functionally, zinc phosphodiesterase, which displays some tRNA 3'-processing endonuclease activity. Probably involved in tRNA maturation, by removing a 3'-trailer from precursor tRNA. This chain is Ribonuclease Z, found in Listeria monocytogenes serotype 4b (strain CLIP80459).